We begin with the raw amino-acid sequence, 160 residues long: Large ribosomal subunit protein eL21 (160 aa).

It belongs to the eukaryotic ribosomal protein eL21 family.

This chain is Large ribosomal subunit protein eL21 (RPL21), found in Encephalitozoon cuniculi (strain GB-M1) (Microsporidian parasite).